The sequence spans 728 residues: FAD-dependent monooxygenase avaB (728 aa).

A helical membrane pass occupies residues 17-37 (VIDLLLTFFFYSGLYGLIAAK). A compositionally biased stretch (polar residues) spans 50–64 (NQQCENTDDVPQSFQ). The disordered stretch occupies residues 50–72 (NQQCENTDDVPQSFQRPRDTRST). Val168 is an FAD binding site. 490 to 491 (DL) is a binding site for NADP(+).

Belongs to the FAD-binding monooxygenase family. Requires FAD as cofactor.

It is found in the membrane. It participates in secondary metabolite metabolism. Multifunctional FAD-dependent monooxygenase; part of the cluster that mediates the biosynthesis of a highly modified cyclo-arginine-tryptophan dipeptide (cRW). Within the pathway, avaB uses the avaA cyclo-arginine-tryptophan dipeptide (cRW) as substrate to generate the cyclo-Arg-formylkynurenine diketopiperazine (DKP). AvaB also catalyzes an additional N-oxidation of the avaC product which is followed by cyclization and dehydration. The first step of the pathway is perfornmed by the arginine-containing cyclodipeptide synthase (RCPDS) avaA that acts as the scaffold-generating enzyme and is responsible for formation of the cyclo-Arg-Trp (cRW) diketopiperazine. AvaB then acts as a multifunctional flavoenzyme that is responsible for generating the cyclo-Arg-formylkynurenine DKP, which can be deformylated by avaC. AvaB then further catalyzes an additional N-oxidation followed by cyclization and dehydration. The next step is an N-acetylation of the guanidine group catalyzed by the arginine N-acetyltransferase avaD. The roles of the additional enzymes identified within the ava cluster still have to be determined. This is FAD-dependent monooxygenase avaB from Aspergillus versicolor.